The primary structure comprises 250 residues: Glycerol-1-phosphate phosphohydrolase 2 (250 aa).

D18 functions as the Nucleophile in the catalytic mechanism. D18 and D20 together coordinate Mg(2+). The active-site Proton donor is the D20. K64 participates in a covalent cross-link: Glycyl lysine isopeptide (Lys-Gly) (interchain with G-Cter in ubiquitin). S90 carries the post-translational modification Phosphoserine. A Glycyl lysine isopeptide (Lys-Gly) (interchain with G-Cter in ubiquitin) cross-link involves residue K144. D179 contributes to the Mg(2+) binding site.

Belongs to the HAD-like hydrolase superfamily. DOG/GPP family. In terms of assembly, monomer. It depends on Mg(2+) as a cofactor.

The protein localises to the cytoplasm. It is found in the nucleus. The enzyme catalyses sn-glycerol 1-phosphate + H2O = glycerol + phosphate. It carries out the reaction sn-glycerol 3-phosphate + H2O = glycerol + phosphate. In terms of biological role, glycerol-1-phosphate phosphohydrolase involved in glycerol biosynthesis. Plays a role in osmoadaptation. The polypeptide is Glycerol-1-phosphate phosphohydrolase 2 (Saccharomyces cerevisiae (strain ATCC 204508 / S288c) (Baker's yeast)).